Reading from the N-terminus, the 342-residue chain is D-erythrose-4-phosphate dehydrogenase (342 aa).

NAD(+) is bound at residue 12-13; it reads RI. Substrate is bound by residues 154 to 156, Arg200, 213 to 214, and Arg236; these read SCT and TK. Residue Cys155 is the Nucleophile of the active site. NAD(+) is bound at residue Asn318.

This sequence belongs to the glyceraldehyde-3-phosphate dehydrogenase family. Epd subfamily. In terms of assembly, homotetramer.

It localises to the cytoplasm. It carries out the reaction D-erythrose 4-phosphate + NAD(+) + H2O = 4-phospho-D-erythronate + NADH + 2 H(+). The protein operates within cofactor biosynthesis; pyridoxine 5'-phosphate biosynthesis; pyridoxine 5'-phosphate from D-erythrose 4-phosphate: step 1/5. Its function is as follows. Catalyzes the NAD-dependent conversion of D-erythrose 4-phosphate to 4-phosphoerythronate. In Klebsiella pneumoniae (strain 342), this protein is D-erythrose-4-phosphate dehydrogenase.